Consider the following 94-residue polypeptide: Co-chaperonin GroES (94 aa).

Belongs to the GroES chaperonin family. In terms of assembly, heptamer of 7 subunits arranged in a ring. Interacts with the chaperonin GroEL.

The protein resides in the cytoplasm. Its function is as follows. Together with the chaperonin GroEL, plays an essential role in assisting protein folding. The GroEL-GroES system forms a nano-cage that allows encapsulation of the non-native substrate proteins and provides a physical environment optimized to promote and accelerate protein folding. GroES binds to the apical surface of the GroEL ring, thereby capping the opening of the GroEL channel. The chain is Co-chaperonin GroES from Alkaliphilus metalliredigens (strain QYMF).